The primary structure comprises 200 residues: Large ribosomal subunit protein uL4 (200 aa).

Residues 38–68 are disordered; that stretch reads GRQGSKQQKTRSDVRGGGKRPWRQKGTGRAR. Basic residues predominate over residues 54–65; sequence GGKRPWRQKGTG.

Belongs to the universal ribosomal protein uL4 family. Part of the 50S ribosomal subunit.

Its function is as follows. One of the primary rRNA binding proteins, this protein initially binds near the 5'-end of the 23S rRNA. It is important during the early stages of 50S assembly. It makes multiple contacts with different domains of the 23S rRNA in the assembled 50S subunit and ribosome. In terms of biological role, forms part of the polypeptide exit tunnel. The protein is Large ribosomal subunit protein uL4 of Pseudomonas fluorescens (strain Pf0-1).